Reading from the N-terminus, the 241-residue chain is Octanoyltransferase (241 aa).

Residues Ala38–Leu227 enclose the BPL/LPL catalytic domain. Substrate-binding positions include Arg85–His92, Ala157–Gly159, and Gly170–Ala172. Cys188 functions as the Acyl-thioester intermediate in the catalytic mechanism.

This sequence belongs to the LipB family.

The protein resides in the cytoplasm. It catalyses the reaction octanoyl-[ACP] + L-lysyl-[protein] = N(6)-octanoyl-L-lysyl-[protein] + holo-[ACP] + H(+). It participates in protein modification; protein lipoylation via endogenous pathway; protein N(6)-(lipoyl)lysine from octanoyl-[acyl-carrier-protein]: step 1/2. Functionally, catalyzes the transfer of endogenously produced octanoic acid from octanoyl-acyl-carrier-protein onto the lipoyl domains of lipoate-dependent enzymes. Lipoyl-ACP can also act as a substrate although octanoyl-ACP is likely to be the physiological substrate. This is Octanoyltransferase from Mycobacterium marinum (strain ATCC BAA-535 / M).